Here is a 191-residue protein sequence, read N- to C-terminus: UPF0228 protein MM_1428 (191 aa).

Belongs to the UPF0228 family.

The polypeptide is UPF0228 protein MM_1428 (Methanosarcina mazei (strain ATCC BAA-159 / DSM 3647 / Goe1 / Go1 / JCM 11833 / OCM 88) (Methanosarcina frisia)).